The following is a 40-amino-acid chain: MKVHRMPKGVVLVGKAWEIRAKLKEYGRTFQYVKDWISKP.

As to quaternary structure, interacts with FtsZ. Binds to the C-terminal polymerization interface of FtsZ. Binds to FtsZ filaments.

With respect to regulation, highly effective in inhibiting polymerization at low and intermediate concentrations of GTP and only partially effective at high GTP concentrations. Functionally, blocks Z-ring formation in the mother cell during sporulation by inhibiting the polymerization of FtsZ. Binds to the minus end of FtsZ and functions as a filament-capping protein. At high concentrations, is capable of both capping and sequestration of FtsZ. Decreases the GTPase activity of FtsZ. In Bacillus subtilis (strain 168), this protein is Cell division inhibitor MciZ.